The chain runs to 325 residues: Probable cell division protein WhiA (325 aa).

Positions 273–306 (SLEELGALADPPLTKDAVAGRIRRLLALADKRAN) form a DNA-binding region, H-T-H motif.

Belongs to the WhiA family.

Functionally, involved in cell division and chromosome segregation. This is Probable cell division protein WhiA from Frankia casuarinae (strain DSM 45818 / CECT 9043 / HFP020203 / CcI3).